Consider the following 535-residue polypeptide: Dual specificity calcium/calmodulin-dependent 3',5'-cyclic nucleotide phosphodiesterase 1B (535 aa).

The segment at 1–21 (MELSPRSPPEMLESDCPSPLE) is disordered. 2 positions are modified to phosphoserine: serine 7 and serine 14. Calmodulin-binding stretches follow at residues 27–47 (SKKMWIKLRSLLRYMVKQLEN) and 117–140 (EKPKFRSIVHAVQAGIFVERMFRR). Positions 145-502 (VGPTYSTAVH…QKWKERAASG (358 aa)) constitute a PDEase domain. Histidine 222 serves as the catalytic Proton donor. Zn(2+) is bound by residues histidine 226, histidine 262, aspartate 263, and aspartate 369. Aspartate 263 is a binding site for Mg(2+). Disordered regions lie at residues 445–474 (PLTDDDSKSKSQPSFQWRQPSLDVDVGDPN) and 495–535 (WKER…GNLD). A compositionally biased stretch (polar residues) spans 454–463 (KSQPSFQWRQ). 2 positions are modified to phosphoserine: serine 465 and serine 513.

It belongs to the cyclic nucleotide phosphodiesterase family. PDE1 subfamily. Homodimer. Zn(2+) serves as cofactor. Mg(2+) is required as a cofactor. Expressed in brain.

The protein localises to the cytoplasm. The protein resides in the cytosol. It catalyses the reaction a nucleoside 3',5'-cyclic phosphate + H2O = a nucleoside 5'-phosphate + H(+). The enzyme catalyses 3',5'-cyclic GMP + H2O = GMP + H(+). It carries out the reaction 3',5'-cyclic AMP + H2O = AMP + H(+). Its activity is regulated as follows. Type I PDE are activated by the binding of calmodulin in the presence of Ca(2+). Its function is as follows. Cyclic nucleotide phosphodiesterase with a dual specificity for the second messengers cAMP and cGMP, which are key regulators of many important physiological processes. Has a preference for cGMP as a substrate. This Rattus norvegicus (Rat) protein is Dual specificity calcium/calmodulin-dependent 3',5'-cyclic nucleotide phosphodiesterase 1B.